A 302-amino-acid polypeptide reads, in one-letter code: Acetylglutamate kinase (302 aa).

Substrate is bound by residues 67–68 (GG), Arg-89, and Asn-194.

This sequence belongs to the acetylglutamate kinase family. ArgB subfamily.

The protein resides in the cytoplasm. It carries out the reaction N-acetyl-L-glutamate + ATP = N-acetyl-L-glutamyl 5-phosphate + ADP. The protein operates within amino-acid biosynthesis; L-arginine biosynthesis; N(2)-acetyl-L-ornithine from L-glutamate: step 2/4. Its function is as follows. Catalyzes the ATP-dependent phosphorylation of N-acetyl-L-glutamate. The chain is Acetylglutamate kinase from Hahella chejuensis (strain KCTC 2396).